Here is a 470-residue protein sequence, read N- to C-terminus: Argininosuccinate lyase (470 aa).

It belongs to the lyase 1 family. Argininosuccinate lyase subfamily.

It localises to the cytoplasm. It carries out the reaction 2-(N(omega)-L-arginino)succinate = fumarate + L-arginine. Its pathway is amino-acid biosynthesis; L-arginine biosynthesis; L-arginine from L-ornithine and carbamoyl phosphate: step 3/3. The sequence is that of Argininosuccinate lyase from Mycobacterium tuberculosis (strain ATCC 25618 / H37Rv).